The primary structure comprises 115 residues: Large ribosomal subunit protein bL19 (115 aa).

The protein belongs to the bacterial ribosomal protein bL19 family.

Functionally, this protein is located at the 30S-50S ribosomal subunit interface and may play a role in the structure and function of the aminoacyl-tRNA binding site. In Lactobacillus acidophilus (strain ATCC 700396 / NCK56 / N2 / NCFM), this protein is Large ribosomal subunit protein bL19.